Reading from the N-terminus, the 463-residue chain is Elongation factor 1-alpha (463 aa).

The tr-type G domain occupies 5-242; the sequence is KVHINIVVIG…DSIIPPQRPT (238 aa). Residues 14-21 are G1; sequence GHVDSGKS. Position 14 to 21 (14 to 21) interacts with GTP; the sequence is GHVDSGKS. Residues 70–74 form a G2 region; it reads GITID. Residues 91–94 are G3; sequence DAPG. GTP-binding positions include 91–95 and 153–156; these read DAPGH and NKMD. Residues 153–156 are G4; it reads NKMD. The tract at residues 194–196 is G5; that stretch reads SGF. 5-glutamyl glycerylphosphorylethanolamine is present on residues Glu301 and Glu374. The segment at 443 to 463 is disordered; that stretch reads KSDGSSGKVTKSAQKAAPKKK. The span at 446-455 shows a compositional bias: polar residues; it reads GSSGKVTKSA.

This sequence belongs to the TRAFAC class translation factor GTPase superfamily. Classic translation factor GTPase family. EF-Tu/EF-1A subfamily.

It localises to the cytoplasm. Its function is as follows. This protein promotes the GTP-dependent binding of aminoacyl-tRNA to the A-site of ribosomes during protein biosynthesis. This Caenorhabditis elegans protein is Elongation factor 1-alpha.